The following is a 125-amino-acid chain: Phosphoribosyl-AMP cyclohydrolase (125 aa).

Position 91 (Asp-91) interacts with Mg(2+). Cys-92 is a Zn(2+) binding site. Mg(2+) contacts are provided by Asp-93 and Asp-95. Zn(2+) contacts are provided by Cys-108 and Cys-115.

The protein belongs to the PRA-CH family. Homodimer. Mg(2+) serves as cofactor. Zn(2+) is required as a cofactor.

Its subcellular location is the cytoplasm. The enzyme catalyses 1-(5-phospho-beta-D-ribosyl)-5'-AMP + H2O = 1-(5-phospho-beta-D-ribosyl)-5-[(5-phospho-beta-D-ribosylamino)methylideneamino]imidazole-4-carboxamide. The protein operates within amino-acid biosynthesis; L-histidine biosynthesis; L-histidine from 5-phospho-alpha-D-ribose 1-diphosphate: step 3/9. Functionally, catalyzes the hydrolysis of the adenine ring of phosphoribosyl-AMP. The protein is Phosphoribosyl-AMP cyclohydrolase of Streptomyces griseus subsp. griseus (strain JCM 4626 / CBS 651.72 / NBRC 13350 / KCC S-0626 / ISP 5235).